The primary structure comprises 283 residues: Pantothenate synthetase (283 aa).

30–37 (MGALHEGH) lines the ATP pocket. Catalysis depends on H37, which acts as the Proton donor. Position 61 (Q61) interacts with (R)-pantoate. Q61 contacts beta-alanine. 150-153 (GRKD) lines the ATP pocket. Q156 contacts (R)-pantoate. ATP contacts are provided by residues V179 and 187-190 (MSSR).

It belongs to the pantothenate synthetase family. Homodimer.

It is found in the cytoplasm. The catalysed reaction is (R)-pantoate + beta-alanine + ATP = (R)-pantothenate + AMP + diphosphate + H(+). The protein operates within cofactor biosynthesis; (R)-pantothenate biosynthesis; (R)-pantothenate from (R)-pantoate and beta-alanine: step 1/1. In terms of biological role, catalyzes the condensation of pantoate with beta-alanine in an ATP-dependent reaction via a pantoyl-adenylate intermediate. This Rhodopirellula baltica (strain DSM 10527 / NCIMB 13988 / SH1) protein is Pantothenate synthetase.